The following is a 277-amino-acid chain: Probable endonuclease 4 (277 aa).

Positions 67, 107, 141, 173, 176, 207, 220, 222, and 252 each coordinate Zn(2+).

It belongs to the AP endonuclease 2 family. Zn(2+) is required as a cofactor.

It carries out the reaction Endonucleolytic cleavage to 5'-phosphooligonucleotide end-products.. In terms of biological role, endonuclease IV plays a role in DNA repair. It cleaves phosphodiester bonds at apurinic or apyrimidinic (AP) sites, generating a 3'-hydroxyl group and a 5'-terminal sugar phosphate. This Finegoldia magna (strain ATCC 29328 / DSM 20472 / WAL 2508) (Peptostreptococcus magnus) protein is Probable endonuclease 4.